Consider the following 344-residue polypeptide: Phenylalanine--tRNA ligase alpha subunit (344 aa).

Glutamate 256 contributes to the Mg(2+) binding site.

Belongs to the class-II aminoacyl-tRNA synthetase family. Phe-tRNA synthetase alpha subunit type 1 subfamily. As to quaternary structure, tetramer of two alpha and two beta subunits. The cofactor is Mg(2+).

The protein localises to the cytoplasm. It catalyses the reaction tRNA(Phe) + L-phenylalanine + ATP = L-phenylalanyl-tRNA(Phe) + AMP + diphosphate + H(+). The protein is Phenylalanine--tRNA ligase alpha subunit of Shouchella clausii (strain KSM-K16) (Alkalihalobacillus clausii).